The following is a 504-amino-acid chain: Signal transduction histidine-protein kinase/phosphatase MprB (504 aa).

Topologically, residues 1–26 are cytoplasmic; the sequence is MWWFRRRDRAPLRATSSLSLRWRVML. The chain crosses the membrane as a helical span at residues 27 to 47; the sequence is LAMSMVAMVVVLMSFAVYAVI. Over 48-163 the chain is Extracellular; the sequence is SAALYSDIDN…PTEAVMNKLR (116 aa). Residues 164 to 184 form a helical membrane-spanning segment; that stretch reads WVLLIVGGIGVAVAAVAGGMV. Residues 185-504 are Cytoplasmic-facing; that stretch reads TRAGLRPVGR…SVESQSTRAT (320 aa). Positions 186–238 constitute an HAMP domain; sequence RAGLRPVGRLTEAAERVARTDDLRPIPVFGSDELARLTEAFNLMLRALAESRE. Residues 246–466 enclose the Histidine kinase domain; sequence DAGHELRTPL…SIYVLLPGRR (221 aa). His-249 carries the phosphohistidine; by autocatalysis modification. The segment at 471 to 504 is disordered; that stretch reads QLPGATAGARSTDIENSRGSANVISVESQSTRAT. Over residues 487–504 the composition is skewed to polar residues; that stretch reads SRGSANVISVESQSTRAT.

Requires Mg(2+) as cofactor. It depends on Mn(2+) as a cofactor. In terms of processing, autophosphorylated.

It localises to the cell membrane. It catalyses the reaction ATP + protein L-histidine = ADP + protein N-phospho-L-histidine.. Its function is as follows. Member of the two-component regulatory system MprB/MprA which contributes to maintaining a balance among several systems involved in stress resistance and is required for establishment and maintenance of persistent infection in the host. In response to environmental signals MprB acts both as a membrane-associated protein kinase that undergoes autophosphorylation and subsequently transfers the phosphate to MprA, and a protein phosphatase that dephosphorylates phospho-MprA. In Mycobacterium tuberculosis (strain ATCC 25177 / H37Ra), this protein is Signal transduction histidine-protein kinase/phosphatase MprB (mprB).